We begin with the raw amino-acid sequence, 143 residues long: Large ribosomal subunit protein uL11 (143 aa).

This sequence belongs to the universal ribosomal protein uL11 family. In terms of assembly, part of the ribosomal stalk of the 50S ribosomal subunit. Interacts with L10 and the large rRNA to form the base of the stalk. L10 forms an elongated spine to which L12 dimers bind in a sequential fashion forming a multimeric L10(L12)X complex. Post-translationally, one or more lysine residues are methylated.

In terms of biological role, forms part of the ribosomal stalk which helps the ribosome interact with GTP-bound translation factors. The protein is Large ribosomal subunit protein uL11 of Azotobacter vinelandii (strain DJ / ATCC BAA-1303).